The following is a 212-amino-acid chain: N-acetyltransferase 9-like protein (212 aa).

Residues 34 to 201 form the N-acetyltransferase domain; sequence EEIREQTASE…INLLNLKNND (168 aa).

This sequence belongs to the acetyltransferase family. GNAT subfamily.

The protein is N-acetyltransferase 9-like protein (nat9) of Dictyostelium discoideum (Social amoeba).